The sequence spans 608 residues: Zinc metalloproteinase-disintegrin-like agkihagin (608 aa).

An N-terminal signal peptide occupies residues 1–20 (MIQVLLVTICLAAFPYQGSS). Residues 21–189 (IILESGNVND…KKASQSNLTP (169 aa)) constitute a propeptide that is removed on maturation. The Peptidase M12B domain maps to 199–395 (KFVKLFLVAD…NMPQCILKKP (197 aa)). Disulfide bonds link Cys310–Cys390, Cys350–Cys374, and Cys352–Cys357. His335 is a Zn(2+) binding site. Residue Glu336 is part of the active site. Zn(2+) is bound by residues His339 and His345. One can recognise a Disintegrin domain in the interval 403–488 (PPVCGNYFVE…ADCTDRFQKN (86 aa)). 6 residues coordinate Ca(2+): Val405, Asn408, Phe410, Glu412, Glu415, and Asp418. 14 disulfides stabilise this stretch: Cys406–Cys435, Cys417–Cys430, Cys419–Cys425, Cys429–Cys452, Cys443–Cys449, Cys448–Cys474, Cys461–Cys481, Cys468–Cys499, Cys492–Cys504, Cys511–Cys561, Cys526–Cys570, Cys539–Cys549, Cys556–Cys596, and Cys590–Cys601. Residues 467 to 469 (ECD) carry the D/ECD-tripeptide motif. Ca(2+) is bound by residues Asp469, Met470, Asp472, Asp483, and Arg484. Asn501 carries an N-linked (GlcNAc...) asparagine glycan.

It belongs to the venom metalloproteinase (M12B) family. P-III subfamily. P-IIIc sub-subfamily. In terms of assembly, homodimer; disulfide-linked. Requires Zn(2+) as cofactor. Expressed by the venom gland.

The protein resides in the secreted. Its activity is regulated as follows. Inhibited by EDTA and EGTA. Not inhibited by PMSF, antipain, pepstatin, and iodoacetamide. Its function is as follows. Strongly inhibits the collagen-induced human platelet aggregation. Hydrolyzes the Aalpha-chain of fibrinogen (FGA), without cleavage of Bbeta- and gamma-chains. Induces apoptosis and strongly inhibits proliferation of endothelial cells as well as adhesion of the cells to extracellular matrix proteins. The polypeptide is Zinc metalloproteinase-disintegrin-like agkihagin (Deinagkistrodon acutus (Hundred-pace snake)).